A 387-amino-acid chain; its full sequence is 23S rRNA (uracil(747)-C(5))-methyltransferase RlmC (387 aa).

The [4Fe-4S] cluster site is built by cysteine 3, cysteine 11, cysteine 14, and cysteine 86. S-adenosyl-L-methionine is bound by residues glutamine 211, phenylalanine 240, glutamate 269, and asparagine 319. Cysteine 346 serves as the catalytic Nucleophile.

The protein belongs to the class I-like SAM-binding methyltransferase superfamily. RNA M5U methyltransferase family. RlmC subfamily.

The enzyme catalyses uridine(747) in 23S rRNA + S-adenosyl-L-methionine = 5-methyluridine(747) in 23S rRNA + S-adenosyl-L-homocysteine + H(+). Catalyzes the formation of 5-methyl-uridine at position 747 (m5U747) in 23S rRNA. The protein is 23S rRNA (uracil(747)-C(5))-methyltransferase RlmC of Pasteurella multocida (strain Pm70).